We begin with the raw amino-acid sequence, 310 residues long: Lipoyl synthase (310 aa).

[4Fe-4S] cluster contacts are provided by C41, C46, C52, C68, C72, C75, and S281. Residues 54 to 270 (GERRTATFMI…RKVAMEKGFK (217 aa)) form the Radical SAM core domain. The interval 285–310 (DEQVNEAAKERQRIGDEKLEAAKNEA) is disordered.

It belongs to the radical SAM superfamily. Lipoyl synthase family. [4Fe-4S] cluster serves as cofactor.

It localises to the cytoplasm. It carries out the reaction [[Fe-S] cluster scaffold protein carrying a second [4Fe-4S](2+) cluster] + N(6)-octanoyl-L-lysyl-[protein] + 2 oxidized [2Fe-2S]-[ferredoxin] + 2 S-adenosyl-L-methionine + 4 H(+) = [[Fe-S] cluster scaffold protein] + N(6)-[(R)-dihydrolipoyl]-L-lysyl-[protein] + 4 Fe(3+) + 2 hydrogen sulfide + 2 5'-deoxyadenosine + 2 L-methionine + 2 reduced [2Fe-2S]-[ferredoxin]. The protein operates within protein modification; protein lipoylation via endogenous pathway; protein N(6)-(lipoyl)lysine from octanoyl-[acyl-carrier-protein]. Functionally, catalyzes the radical-mediated insertion of two sulfur atoms into the C-6 and C-8 positions of the octanoyl moiety bound to the lipoyl domains of lipoate-dependent enzymes, thereby converting the octanoylated domains into lipoylated derivatives. This Staphylococcus carnosus (strain TM300) protein is Lipoyl synthase.